A 319-amino-acid chain; its full sequence is Lipooligosaccharide heptosyltransferase 2 (319 aa).

Belongs to the glycosyltransferase 9 family.

It carries out the reaction an L-alpha-D-Hep-(1-&gt;5)-[alpha-Kdo-(2-&gt;4)]-alpha-Kdo-(2-&gt;6)-lipid A + ADP-L-glycero-beta-D-manno-heptose = an L-alpha-D-Hep-(1-&gt;3)-L-alpha-D-Hep-(1-&gt;5)-[alpha-Kdo-(2-&gt;4)]-alpha-Kdo-(2-&gt;6)-lipid A + ADP + H(+). The protein operates within bacterial outer membrane biogenesis; LOS core biosynthesis. Functionally, glycosyltransferase involved in the biosynthesis of the core oligosaccharide region of lipooligosaccharide (LOS). Catalyzes the addition of the second heptose unit to the heptosyl-Kdo2-lipid A module. This is Lipooligosaccharide heptosyltransferase 2 from Campylobacter jejuni subsp. jejuni serotype O:2 (strain ATCC 700819 / NCTC 11168).